Reading from the N-terminus, the 83-residue chain is Exodeoxyribonuclease 7 small subunit (83 aa).

It belongs to the XseB family. In terms of assembly, heterooligomer composed of large and small subunits.

The protein localises to the cytoplasm. It catalyses the reaction Exonucleolytic cleavage in either 5'- to 3'- or 3'- to 5'-direction to yield nucleoside 5'-phosphates.. Its function is as follows. Bidirectionally degrades single-stranded DNA into large acid-insoluble oligonucleotides, which are then degraded further into small acid-soluble oligonucleotides. The protein is Exodeoxyribonuclease 7 small subunit of Afipia carboxidovorans (strain ATCC 49405 / DSM 1227 / KCTC 32145 / OM5) (Oligotropha carboxidovorans).